Consider the following 433-residue polypeptide: Ornithine decarboxylase 1B, chloroplastic (433 aa).

The residue at position 96 (K96) is an N6-(pyridoxal phosphate)lysine. Pyridoxal 5'-phosphate-binding positions include S228, G266, and 299-302 (EPGR). 342 to 343 (YD) is a substrate binding site. The active-site Proton donor; shared with dimeric partner is the C378. Substrate is bound at residue D379. Y407 provides a ligand contact to pyridoxal 5'-phosphate.

Belongs to the Orn/Lys/Arg decarboxylase class-II family. Homodimer. Only the dimer is catalytically active, as the active sites are constructed of residues from both monomers. Pyridoxal 5'-phosphate is required as a cofactor.

The protein localises to the plastid. Its subcellular location is the chloroplast. The enzyme catalyses L-ornithine + H(+) = putrescine + CO2. It functions in the pathway alkaloid biosynthesis; nicotine biosynthesis. Its pathway is amine and polyamine biosynthesis; putrescine biosynthesis via L-ornithine pathway; putrescine from L-ornithine: step 1/1. Functionally, involved in the biosynthesis of pyridine alkaloid natural products, leading mainly to the production of anabasine, anatabine, nicotine and nornicotine, effective deterrents against herbivores with antiparasitic and pesticide properties (neurotoxins); nornicotine serves as the precursor in the synthesis of the carcinogen compound N'-nitrosonornicotine (NNN). Catalyzes the first and rate-limiting step of polyamine biosynthesis that converts ornithine into putrescine, which is the precursor for the polyamines, spermidine and spermine. Polyamines are essential for cell proliferation and are implicated in cellular processes, ranging from DNA replication to apoptosis. The polypeptide is Ornithine decarboxylase 1B, chloroplastic (Nicotiana tabacum (Common tobacco)).